The primary structure comprises 444 residues: tRNA modification GTPase MnmE (444 aa).

Residues Arg-23, Glu-82, and Lys-121 each coordinate (6S)-5-formyl-5,6,7,8-tetrahydrofolate. In terms of domain architecture, TrmE-type G spans 216-365; it reads GTSIVLAGLP…LKQALQKWLN (150 aa). Asn-226 is a K(+) binding site. Residues 226 to 231, 245 to 251, and 270 to 273 each bind GTP; these read NAGKSS, TDIPGTT, and DSAG. Ser-230 serves as a coordination point for Mg(2+). Residues Thr-245, Ile-247, and Thr-250 each contribute to the K(+) site. Thr-251 contacts Mg(2+). Lys-444 is a binding site for (6S)-5-formyl-5,6,7,8-tetrahydrofolate.

Belongs to the TRAFAC class TrmE-Era-EngA-EngB-Septin-like GTPase superfamily. TrmE GTPase family. Homodimer. Heterotetramer of two MnmE and two MnmG subunits. K(+) serves as cofactor.

It localises to the cytoplasm. Exhibits a very high intrinsic GTPase hydrolysis rate. Involved in the addition of a carboxymethylaminomethyl (cmnm) group at the wobble position (U34) of certain tRNAs, forming tRNA-cmnm(5)s(2)U34. The chain is tRNA modification GTPase MnmE from Chlamydia trachomatis serovar A (strain ATCC VR-571B / DSM 19440 / HAR-13).